The following is a 248-amino-acid chain: (2S)-[(R)-hydroxy(phenyl)methyl]succinyl-CoA dehydrogenase subunit BbsD (248 aa).

Residues Ser-15, Asp-36, Asp-62, Ile-63, Asn-89, Tyr-153, and Lys-157 each contribute to the NAD(+) site. Tyr-153 (proton acceptor) is an active-site residue.

It belongs to the short-chain dehydrogenases/reductases (SDR) family. In terms of assembly, heterotetramer composed of 2 inactive BbsC subunits and 2 active BbsD subunits.

It catalyses the reaction (2S)-[(R)-hydroxy(phenyl)methyl]succinyl-CoA + NAD(+) = (S)-2-benzoylsuccinyl-CoA + NADH + H(+). The protein operates within xenobiotic degradation; toluene degradation. Activity is probably regulated by the inactive BbsC subunit. Involved in an anaerobic toluene degradation pathway. Active subunit that catalyzes the oxidation of 2-(alpha-hydroxybenzyl)succinyl-CoA to 2-benzoylsuccinyl-CoA. In vitro, can catalyze the NADH-dependent reduction of the artificial substrates 2,2-dichloroacetophene and 2,4'-dichloroacetophenone. This chain is (2S)-[(R)-hydroxy(phenyl)methyl]succinyl-CoA dehydrogenase subunit BbsD, found in Thauera aromatica.